We begin with the raw amino-acid sequence, 136 residues long: MGIKDIDIKENFGKIVQNMDLKFRKIDDKELLIAIAIDKYKNVLMTAFMDKESLKMTLKTGLMHYFSTSRNKIWMKGEESKNVQKVLEVFKDCDGDALLFIVEQTGWACHEGYMSCFHNKVDLNTGNSTVIGDKLD.

Mg(2+) is bound at residue D92. Position 93 (C93) interacts with Zn(2+). 2 residues coordinate Mg(2+): D94 and D96. 2 residues coordinate Zn(2+): C109 and C116.

It belongs to the PRA-CH family. Homodimer. It depends on Mg(2+) as a cofactor. Zn(2+) is required as a cofactor.

It is found in the cytoplasm. It carries out the reaction 1-(5-phospho-beta-D-ribosyl)-5'-AMP + H2O = 1-(5-phospho-beta-D-ribosyl)-5-[(5-phospho-beta-D-ribosylamino)methylideneamino]imidazole-4-carboxamide. Its pathway is amino-acid biosynthesis; L-histidine biosynthesis; L-histidine from 5-phospho-alpha-D-ribose 1-diphosphate: step 3/9. Its activity is regulated as follows. Reversibly inhibited by EDTA and free zinc ions. Enzyme is inactivated by dialysis against 1,10-phenanthroline, which is a zinc specific chelator. Its function is as follows. Catalyzes the hydrolysis of the adenine ring of phosphoribosyl-AMP. This is Phosphoribosyl-AMP cyclohydrolase from Methanococcus vannielii.